Here is a 726-residue protein sequence, read N- to C-terminus: Catalase-peroxidase (726 aa).

Positions 96–224 (WHSAGTYRIA…LAAVMMGLIY (129 aa)) form a cross-link, tryptophyl-tyrosyl-methioninium (Trp-Tyr) (with M-250). The active-site Proton acceptor is histidine 97. Residues 224 to 250 (YVNPEGVDGKPDPLKTAHDMRVTFARM) constitute a cross-link (tryptophyl-tyrosyl-methioninium (Tyr-Met) (with W-96)). Histidine 265 provides a ligand contact to heme b.

This sequence belongs to the peroxidase family. Peroxidase/catalase subfamily. In terms of assembly, homodimer or homotetramer. It depends on heme b as a cofactor. Formation of the three residue Trp-Tyr-Met cross-link is important for the catalase, but not the peroxidase activity of the enzyme.

It catalyses the reaction H2O2 + AH2 = A + 2 H2O. The catalysed reaction is 2 H2O2 = O2 + 2 H2O. Functionally, bifunctional enzyme with both catalase and broad-spectrum peroxidase activity. This Vibrio campbellii (strain ATCC BAA-1116) protein is Catalase-peroxidase.